The following is a 331-amino-acid chain: Ferredoxin--NADP reductase 2 (331 aa).

Residues Glu-37, Gln-45, Tyr-50, Val-90, Phe-124, Asp-286, and Thr-327 each contribute to the FAD site.

It belongs to the ferredoxin--NADP reductase type 2 family. As to quaternary structure, homodimer. FAD serves as cofactor.

The catalysed reaction is 2 reduced [2Fe-2S]-[ferredoxin] + NADP(+) + H(+) = 2 oxidized [2Fe-2S]-[ferredoxin] + NADPH. In Listeria monocytogenes serovar 1/2a (strain ATCC BAA-679 / EGD-e), this protein is Ferredoxin--NADP reductase 2.